The chain runs to 299 residues: Regucalcin (299 aa).

An a divalent metal cation-binding site is contributed by Glu-18. Substrate is bound by residues Arg-101, Asn-103, and Glu-121. A divalent metal cation contacts are provided by Asn-154 and Asp-204. Residue Asp-204 is the Proton donor/acceptor of the active site.

This sequence belongs to the SMP-30/CGR1 family. Zn(2+) serves as cofactor. It depends on Mn(2+) as a cofactor. Requires Ca(2+) as cofactor. Mg(2+) is required as a cofactor. As to expression, expressed in the liver, and in the pronephros from the late tadpole stage.

Its subcellular location is the cytoplasm. It catalyses the reaction D-glucono-1,5-lactone + H2O = D-gluconate + H(+). It participates in cofactor biosynthesis; L-ascorbate biosynthesis via UDP-alpha-D-glucuronate pathway; L-ascorbate from UDP-alpha-D-glucuronate: step 3/4. In terms of biological role, gluconolactonase with low activity towards other sugar lactones, including gulonolactone and galactonolactone. Catalyzes a key step in ascorbic acid (vitamin C) biosynthesis. Can also hydrolyze diisopropyl phosphorofluoridate and phenylacetate (in vitro). Calcium-binding protein. Modulates Ca(2+) signaling, and Ca(2+)-dependent cellular processes and enzyme activities. This is Regucalcin from Xenopus laevis (African clawed frog).